Here is a 360-residue protein sequence, read N- to C-terminus: Nicotinate-nucleotide--dimethylbenzimidazole phosphoribosyltransferase (360 aa).

The active-site Proton acceptor is Glu-327.

The protein belongs to the CobT family.

The enzyme catalyses 5,6-dimethylbenzimidazole + nicotinate beta-D-ribonucleotide = alpha-ribazole 5'-phosphate + nicotinate + H(+). It participates in nucleoside biosynthesis; alpha-ribazole biosynthesis; alpha-ribazole from 5,6-dimethylbenzimidazole: step 1/2. Its function is as follows. Catalyzes the synthesis of alpha-ribazole-5'-phosphate from nicotinate mononucleotide (NAMN) and 5,6-dimethylbenzimidazole (DMB). In Shewanella baltica (strain OS155 / ATCC BAA-1091), this protein is Nicotinate-nucleotide--dimethylbenzimidazole phosphoribosyltransferase.